We begin with the raw amino-acid sequence, 47 residues long: Large ribosomal subunit protein bL33 (47 aa).

Belongs to the bacterial ribosomal protein bL33 family.

This chain is Large ribosomal subunit protein bL33, found in Staphylococcus saprophyticus.